The primary structure comprises 246 residues: Large ribosomal subunit protein uL3 (246 aa).

Disordered stretches follow at residues 140 to 162 and 215 to 246; these read SHRS…NKKM and DVPL…EENA. N5-methylglutamine is present on glutamine 151. Over residues 234-246 the composition is skewed to low complexity; it reads EAAPEAPASEENA.

It belongs to the universal ribosomal protein uL3 family. Part of the 50S ribosomal subunit. Forms a cluster with proteins L14 and L19. Methylated by PrmB.

Functionally, one of the primary rRNA binding proteins, it binds directly near the 3'-end of the 23S rRNA, where it nucleates assembly of the 50S subunit. This is Large ribosomal subunit protein uL3 from Methylorubrum extorquens (strain PA1) (Methylobacterium extorquens).